A 517-amino-acid chain; its full sequence is ATP synthase subunit beta (517 aa).

ATP is bound at residue 167–174 (GGAGVGKT). 2 stretches are compositionally biased toward basic and acidic residues: residues 475-484 (AESMGAKMDD) and 495-508 (DSKDKGKGDSKADD). The interval 475 to 517 (AESMGAKMDDGGSDGAPPPSDSKDKGKGDSKADDKGDDADKDA) is disordered.

The protein belongs to the ATPase alpha/beta chains family. F-type ATPases have 2 components, CF(1) - the catalytic core - and CF(0) - the membrane proton channel. CF(1) has five subunits: alpha(3), beta(3), gamma(1), delta(1), epsilon(1). CF(0) has three main subunits: a(1), b(2) and c(9-12). The alpha and beta chains form an alternating ring which encloses part of the gamma chain. CF(1) is attached to CF(0) by a central stalk formed by the gamma and epsilon chains, while a peripheral stalk is formed by the delta and b chains.

The protein localises to the cell membrane. It carries out the reaction ATP + H2O + 4 H(+)(in) = ADP + phosphate + 5 H(+)(out). Functionally, produces ATP from ADP in the presence of a proton gradient across the membrane. The catalytic sites are hosted primarily by the beta subunits. The sequence is that of ATP synthase subunit beta from Mycobacterium sp. (strain JLS).